The following is a 254-amino-acid chain: Pyrroloquinoline-quinone synthase (254 aa).

The protein belongs to the PqqC family.

It carries out the reaction 6-(2-amino-2-carboxyethyl)-7,8-dioxo-1,2,3,4,7,8-hexahydroquinoline-2,4-dicarboxylate + 3 O2 = pyrroloquinoline quinone + 2 H2O2 + 2 H2O + H(+). It functions in the pathway cofactor biosynthesis; pyrroloquinoline quinone biosynthesis. Its function is as follows. Ring cyclization and eight-electron oxidation of 3a-(2-amino-2-carboxyethyl)-4,5-dioxo-4,5,6,7,8,9-hexahydroquinoline-7,9-dicarboxylic-acid to PQQ. This chain is Pyrroloquinoline-quinone synthase, found in Rhodopseudomonas palustris (strain TIE-1).